A 1190-amino-acid chain; its full sequence is Plakophilin-4 (1190 aa).

Positions M1–T32 are disordered. The stretch at T36–A63 forms a coiled coil. The segment at A73–Q347 is disordered. S75 is subject to Phosphoserine. A compositionally biased stretch (polar residues) spans S77–K86. T84 carries the phosphothreonine modification. S106, S132, S136, and S139 each carry phosphoserine. Polar residues-rich tracts occupy residues G138–G156, F163–V203, and S213–V229. Phosphoserine occurs at positions 220, 230, and 235. The span at S230–G241 shows a compositional bias: low complexity. Polar residues predominate over residues P247–P266. Residues R253 and R269 each carry the omega-N-methylarginine modification. S272, S280, S313, S326, and S336 each carry phosphoserine. The span at S289–R323 shows a compositional bias: polar residues. Over residues V324–P337 the composition is skewed to low complexity. Y371 carries the post-translational modification Phosphotyrosine. Phosphoserine is present on residues S391, S402, and S405. At T411 the chain carries Phosphothreonine. The residue at position 414 (Y414) is a Phosphotyrosine. Phosphoserine occurs at positions 421, 426, and 437. Y477 carries the phosphotyrosine modification. Residues S509, S511, and S514 each carry the phosphoserine modification. 3 ARM repeats span residues K517–F556, N559–F598, and D603–S643. Residues G772–E781 are compositionally biased toward basic and acidic residues. Residues G772–G809 are disordered. Phosphoserine is present on S775. One copy of the ARM 4 repeat lies at A861–L900. T1012 and T1016 each carry phosphothreonine. 4 positions are modified to phosphoserine: S1044, S1090, S1099, and S1133.

This sequence belongs to the beta-catenin family. Interacts (via the C-terminus) with FRMPD2 (via the PDZ 2 domain). Interacts with PDZD2. Interacts with RHOA; the interaction is detected at the midbody. Interacts with ECT2; the interaction is detected at the midbody. Interacts with CCDC85B.

The protein localises to the cell junction. The protein resides in the desmosome. Its subcellular location is the cytoplasm. It is found in the cytoskeleton. It localises to the spindle. The protein localises to the spindle pole. The protein resides in the midbody. Its subcellular location is the cell membrane. In terms of biological role, plays a role as a regulator of Rho activity during cytokinesis. May play a role in junctional plaques. The sequence is that of Plakophilin-4 (Pkp4) from Mus musculus (Mouse).